Consider the following 576-residue polypeptide: RING finger and SPRY domain-containing protein 1 (576 aa).

The first 16 residues, 1–16, serve as a signal peptide directing secretion; it reads MIVFGWAVFLASRSLG. Residue S50 is modified to Phosphoserine. The segment at 50 to 99 is disordered; the sequence is SGTDDSVDTQQQQAENSAVPTADTRSQPRDPVRPPRRGRGPHEPRRKKQN. A compositionally biased stretch (polar residues) spans 57–68; it reads DTQQQQAENSAV. Over residues 83–97 the composition is skewed to basic residues; that stretch reads PPRRGRGPHEPRRKK. A B30.2/SPRY domain is found at 300–483; sequence LFLKEGRQLT…CEFNFGAKPF (184 aa). Residue N314 is glycosylated (N-linked (GlcNAc...) asparagine). The RING-type zinc finger occupies 527 to 562; sequence CSLCCDEVADTQLKPCGHSDLCMDCALQLETCPLCR.

The protein localises to the secreted. This chain is RING finger and SPRY domain-containing protein 1 (RSPRY1), found in Pongo abelii (Sumatran orangutan).